The chain runs to 300 residues: Glucose and ribitol dehydrogenase homolog (300 aa).

Polar residues predominate over residues 1 to 14 (MASQQFPPQNQETQ). Residues 1-23 (MASQQFPPQNQETQPGKEHAMDP) form a disordered region. 44–68 (IVTGGDSGIGRAVCLCFALEGATVA) is an NAD(+) binding site. Ser-192 lines the substrate pocket. Tyr-205 serves as the catalytic Proton acceptor.

Belongs to the short-chain dehydrogenases/reductases (SDR) family.

In terms of biological role, may act as a short alcohol-polyol-sugar dehydrogenase possibly related to carbohydrate metabolism and the acquisition of desiccation tolerance. May also be involved in signal transduction. In Oryza sativa subsp. japonica (Rice), this protein is Glucose and ribitol dehydrogenase homolog.